A 179-amino-acid chain; its full sequence is Stress response regulator gls24 homolog (179 aa).

A disordered region spans residues 147 to 179 (TSEFTSHQVENVKASVDNGVEKLQDQKAEPRVK). The span at 165–179 (GVEKLQDQKAEPRVK) shows a compositional bias: basic and acidic residues.

This sequence belongs to the asp23 family.

The protein is Stress response regulator gls24 homolog of Streptococcus pyogenes serotype M28 (strain MGAS6180).